The primary structure comprises 247 residues: Ubiquinone biosynthesis O-methyltransferase (247 aa).

The S-adenosyl-L-methionine site is built by Arg-39, Gly-70, Asp-91, and Met-134.

It belongs to the methyltransferase superfamily. UbiG/COQ3 family.

The catalysed reaction is a 3-demethylubiquinol + S-adenosyl-L-methionine = a ubiquinol + S-adenosyl-L-homocysteine + H(+). It carries out the reaction a 3-(all-trans-polyprenyl)benzene-1,2-diol + S-adenosyl-L-methionine = a 2-methoxy-6-(all-trans-polyprenyl)phenol + S-adenosyl-L-homocysteine + H(+). It participates in cofactor biosynthesis; ubiquinone biosynthesis. Its function is as follows. O-methyltransferase that catalyzes the 2 O-methylation steps in the ubiquinone biosynthetic pathway. The protein is Ubiquinone biosynthesis O-methyltransferase of Cereibacter sphaeroides (strain ATCC 17029 / ATH 2.4.9) (Rhodobacter sphaeroides).